The primary structure comprises 185 residues: MSGIDLNDIKRRMDGAINAFKSDIASLRTGRASANILDPVTIDAYGSRVPLNQVANITVPEPRMLGVNIWDKSMVNAVDRAIRESNLGLNPIVDGQNLRIPLPELNEERRKSLVKVAHEYSEKAKVAIRHVRRDGMDGLKKAEKDGDIGQDESRGQSEKVQKMTDDTISEIDRLLAEKEKEIMQV.

The disordered stretch occupies residues 137-166 (DGLKKAEKDGDIGQDESRGQSEKVQKMTDD).

This sequence belongs to the RRF family.

It is found in the cytoplasm. Functionally, responsible for the release of ribosomes from messenger RNA at the termination of protein biosynthesis. May increase the efficiency of translation by recycling ribosomes from one round of translation to another. The protein is Ribosome-recycling factor of Agrobacterium fabrum (strain C58 / ATCC 33970) (Agrobacterium tumefaciens (strain C58)).